Reading from the N-terminus, the 107-residue chain is MTQPLICAYRMCFVIDKYHSIFMCANYLNVYLERSTMVFSFLTVMPGDFIKCLFLRFFVKFKLRFPNGLLNIFQKMLFNMLVQVTHELLRMRICSITNFFRVLVRLV.

Residues Met-37–Val-59 form a helical membrane-spanning segment.

Its subcellular location is the membrane. This is an uncharacterized protein from Saccharomyces cerevisiae (strain ATCC 204508 / S288c) (Baker's yeast).